Here is a 244-residue protein sequence, read N- to C-terminus: Cell division protein ZipA (244 aa).

At 1–4 (MSDM) the chain is on the periplasmic side. The helical transmembrane segment at 5–25 (AMIRIGILIAGLLLVAAIFLF) threads the bilayer. Over 26-244 (GRPKKSPQGR…APPLTKSPRW (219 aa)) the chain is Cytoplasmic. The interval 30–91 (KSPQGRRVDK…GAGGNDVGKR (62 aa)) is disordered. The span at 35–50 (RRVDKDDTQPRERREP) shows a compositional bias: basic and acidic residues.

Belongs to the ZipA family. Interacts with FtsZ via their C-terminal domains.

It localises to the cell inner membrane. Functionally, essential cell division protein that stabilizes the FtsZ protofilaments by cross-linking them and that serves as a cytoplasmic membrane anchor for the Z ring. Also required for the recruitment to the septal ring of downstream cell division proteins. The protein is Cell division protein ZipA of Xanthomonas campestris pv. campestris (strain ATCC 33913 / DSM 3586 / NCPPB 528 / LMG 568 / P 25).